A 933-amino-acid chain; its full sequence is Isoleucine--tRNA ligase (933 aa).

The 'HIGH' region signature appears at 57 to 67 (PYANGNIHVGH). Position 554 (Glu554) interacts with L-isoleucyl-5'-AMP. The 'KMSKS' region motif lies at 595–599 (KMSKS). Lys598 is an ATP binding site.

This sequence belongs to the class-I aminoacyl-tRNA synthetase family. IleS type 1 subfamily. In terms of assembly, monomer.

The protein resides in the cytoplasm. It catalyses the reaction tRNA(Ile) + L-isoleucine + ATP = L-isoleucyl-tRNA(Ile) + AMP + diphosphate. Functionally, catalyzes the attachment of isoleucine to tRNA(Ile). As IleRS can inadvertently accommodate and process structurally similar amino acids such as valine, to avoid such errors it has two additional distinct tRNA(Ile)-dependent editing activities. One activity is designated as 'pretransfer' editing and involves the hydrolysis of activated Val-AMP. The other activity is designated 'posttransfer' editing and involves deacylation of mischarged Val-tRNA(Ile). In Streptococcus pyogenes serotype M6 (strain ATCC BAA-946 / MGAS10394), this protein is Isoleucine--tRNA ligase.